Here is a 147-residue protein sequence, read N- to C-terminus: Hordoindoline-B2 (147 aa).

The N-terminal stretch at 1–19 is a signal peptide; sequence MKTLFLLALLALVASTTSA. A propeptide spanning residues 20 to 28 is cleaved from the precursor; it reads QYSVGGGYN.

In terms of processing, five disulfide bonds are present. Found in endosperm and aleurone layer of developing kernels, but not in the embryo.

Its subcellular location is the membrane. It is found in the secreted. It localises to the extracellular space. Acts as a membranotoxin, probably through its antibacterial and antifungal activities, contributing to the defense mechanism of the plant against predators. Forms monovalent cation-selective ion channels in membranes. Contributes to grain texture and hardness. In Hordeum vulgare (Barley), this protein is Hordoindoline-B2 (HINB-2).